The chain runs to 250 residues: Tetrathionate reductase subunit B (250 aa).

Positions 1 to 33 (MWTGVNMDSSKRQFLQQLGVLTAGASLVPLAEA) form a signal peptide, tat-type signal. 4Fe-4S ferredoxin-type domains lie at 50-79 (YAMLIDLRRCIGCQSCTVSCTIENQTPQGA), 97-128 (VTNVLLPRLCNHCDNPPCVPVCPVQATFQRED), and 129-158 (GIVVVDNKRCVGCAYCVQACPYDARFINHE). 16 residues coordinate [4Fe-4S] cluster: cysteine 59, cysteine 62, cysteine 65, cysteine 69, cysteine 106, cysteine 109, cysteine 114, cysteine 118, cysteine 138, cysteine 141, cysteine 144, cysteine 148, cysteine 165, cysteine 168, cysteine 180, and cysteine 184.

As to quaternary structure, probably composed of three subunits: TtrA, TtrB and TtrC. Predicted to be exported by the Tat system. The position of the signal peptide cleavage has not been experimentally proven.

Its subcellular location is the periplasm. It is found in the cell inner membrane. Functionally, part of a membrane-bound tetrathionate reductase that catalyzes the reduction of tetrathionate to thiosulfate. TtrB is probably involved in transfer of electrons from TtrC to TtrA. During mice infection, the ability to use tetrathionate as an electron acceptor is a growth advantage for S.typhimurium over the competing microbiota in the lumen of the inflamed gut. This is Tetrathionate reductase subunit B (ttrB) from Salmonella typhimurium (strain LT2 / SGSC1412 / ATCC 700720).